The chain runs to 391 residues: MASSSTFLELTPFQWNQPLPYTQRPHHRTVLLYSKPQRRSNSIRLQISVKYKQSTSSSDPDLRSNFNPFEQIAIQVKKALDSLKKPAIAAVLLGLLLFYDPNSALAASGGRIGGNSFSSRSRSSSSSSSQSYSVPRTSNPSFSYSARTAPYYGPSPFGGGFVGPAVGFGFGGFSSFSLILVGFAAFVLVSGFLSDRSQDDSILTDTQKTSVIKLQVGLLGLGRTLQQDFNRLAESSDTSTPEGLSYVLTEATLALLRHPDYCISCYSSVDVKPSIEKGEKRFNQLSIEERGKFDEETLVNVNSIKRQSSKIRKASGFSNEYIVVTILMAAEGIHKLPPINGTTDLKEALLKLGSIPRNKIMAVEVLWTPQNEADALSERELLEDYPLLRPL.

The transit peptide at 1-48 (MASSSTFLELTPFQWNQPLPYTQRPHHRTVLLYSKPQRRSNSIRLQIS) directs the protein to the chloroplast. Residues 87–107 (AIAAVLLGLLLFYDPNSALAA) traverse the membrane as a helical segment. The segment covering 116–138 (SFSSRSRSSSSSSSQSYSVPRTS) has biased composition (low complexity). The disordered stretch occupies residues 116 to 140 (SFSSRSRSSSSSSSQSYSVPRTSNP). 2 helical membrane passes run 168–188 (FGFGGFSSFSLILVGFAAFVL) and 321–341 (YIVVTILMAAEGIHKLPPING).

Belongs to the FLAP family.

The protein localises to the plastid. It localises to the chloroplast thylakoid membrane. The protein resides in the chloroplast membrane. Its subcellular location is the chloroplast envelope. Its function is as follows. Monitors proton H(+) homeostasis in chloroplasts to manipulate luminal acidification levels appropriately to balance photoprotection and photochemical processes. Required during acclimation response to fluctuating light (e.g. photosynthetic activity optimization) by controlling non-photochemical quenching (NPQ); acts independently from DLDG1. This Arabidopsis thaliana (Mouse-ear cress) protein is FLUCTUATING-LIGHT-ACCLIMATION protein 1, chloroplastic.